We begin with the raw amino-acid sequence, 321 residues long: Acetyl-coenzyme A carboxylase carboxyl transferase subunit alpha (321 aa).

Residues Asp-37–Asp-298 enclose the CoA carboxyltransferase C-terminal domain.

The protein belongs to the AccA family. As to quaternary structure, acetyl-CoA carboxylase is a heterohexamer composed of biotin carboxyl carrier protein (AccB), biotin carboxylase (AccC) and two subunits each of ACCase subunit alpha (AccA) and ACCase subunit beta (AccD).

It localises to the cytoplasm. The enzyme catalyses N(6)-carboxybiotinyl-L-lysyl-[protein] + acetyl-CoA = N(6)-biotinyl-L-lysyl-[protein] + malonyl-CoA. It participates in lipid metabolism; malonyl-CoA biosynthesis; malonyl-CoA from acetyl-CoA: step 1/1. Component of the acetyl coenzyme A carboxylase (ACC) complex. First, biotin carboxylase catalyzes the carboxylation of biotin on its carrier protein (BCCP) and then the CO(2) group is transferred by the carboxyltransferase to acetyl-CoA to form malonyl-CoA. The protein is Acetyl-coenzyme A carboxylase carboxyl transferase subunit alpha of Mannheimia succiniciproducens (strain KCTC 0769BP / MBEL55E).